The sequence spans 259 residues: UPF0014 membrane protein slr1647 (259 aa).

7 consecutive transmembrane segments (helical) span residues 4-24, 34-54, 55-75, 98-118, 128-148, 195-215, and 225-245; these read ALIE…GAAI, LTGQ…VVGY, FLAV…LAIM, LWLS…VVII, YLIP…SLAG, MMVV…LAGG, and ILIM…VTAT.

Belongs to the UPF0014 family.

Its subcellular location is the cell membrane. In Synechocystis sp. (strain ATCC 27184 / PCC 6803 / Kazusa), this protein is UPF0014 membrane protein slr1647.